A 222-amino-acid polypeptide reads, in one-letter code: UPF0758 protein Cag_1513 (222 aa).

The MPN domain maps to 100 to 222; the sequence is KIMAAGDVFE…WYSFRERGLL (123 aa). Zn(2+) is bound by residues His171, His173, and Asp184. The JAMM motif motif lies at 171-184; that stretch reads HNHPSGDVNPSNAD.

The protein belongs to the UPF0758 family.

The protein is UPF0758 protein Cag_1513 of Chlorobium chlorochromatii (strain CaD3).